The primary structure comprises 505 residues: Betaine aldehyde dehydrogenase 1 (505 aa).

Residue 163-172 (WNYPLLMATW) participates in betaine aldehyde binding. 240–245 (GSTETG) contacts NAD(+). Betaine aldehyde contacts are provided by residues Glu-262, 294–297 (QVCS), and Cys-455. Active-site residues include Glu-262 and Cys-296. 4-aminobutanal contacts are provided by residues 262-263 (EL) and Cys-296. Trp-461 is a 4-aminobutanal binding site. A Microbody targeting signal motif is present at residues 503 to 505 (SKL).

It belongs to the aldehyde dehydrogenase family. Homodimer.

The protein resides in the peroxisome. It catalyses the reaction betaine aldehyde + NAD(+) + H2O = glycine betaine + NADH + 2 H(+). It functions in the pathway amine and polyamine biosynthesis; betaine biosynthesis via choline pathway; betaine from betaine aldehyde: step 1/1. In terms of biological role, dehydrogenase that can use N-acetyl-gamma-aminobutyraldehyde (NAGABald), gamma-guanidinobutyraldehyde (GGBald), betaine aldehyde (Bet-ald), gamma-aminobutyraldehyde (GAB-ald), acetaldehyde, 4-aminobutylaldehyde (AB-ald), 3-aminopropionaldehyde (AP-ald), 4-N-trimethylaminobutyraldehyde (TMAB-ald) and 3-N-trimethylaminopropionaldehyde (TMAP-ald) as substrates. Catalyzes the oxidation of GAB-ald more efficiently than Bet-ald. May convert acetaldehyde into acetate, thus facilitating the production of acetyl-CoA in peroxisomes under anaerobic conditions. The protein is Betaine aldehyde dehydrogenase 1 (BADH1) of Oryza sativa subsp. japonica (Rice).